An 81-amino-acid polypeptide reads, in one-letter code: RNA-binding protein Hfq (81 aa).

The region spanning 10–69 (DPFLNTLRKEHVPVSIYLVNGIKLQGQVDSFDQYVILLKNTVTQMVYKHAISTIVPGRAV) is the Sm domain.

This sequence belongs to the Hfq family. In terms of assembly, homohexamer.

Its function is as follows. RNA chaperone that binds small regulatory RNA (sRNAs) and mRNAs to facilitate mRNA translational regulation in response to envelope stress, environmental stress and changes in metabolite concentrations. Also binds with high specificity to tRNAs. This is RNA-binding protein Hfq from Methylobacillus flagellatus (strain ATCC 51484 / DSM 6875 / VKM B-1610 / KT).